A 451-amino-acid polypeptide reads, in one-letter code: tRNA-2-methylthio-N(6)-dimethylallyladenosine synthase (451 aa).

An MTTase N-terminal domain is found at 18-134; it reads ARVYLETYGC…LPNLLDLAES (117 aa). Positions 27, 63, 97, 170, 174, and 177 each coordinate [4Fe-4S] cluster. The region spanning 156–386 is the Radical SAM core domain; that stretch reads RKNGHSAFLA…IALQQKISAE (231 aa). The 63-residue stretch at 389 to 451 folds into the TRAM domain; it reads RNDIGNTHEV…TSATLIGNAL (63 aa).

It belongs to the methylthiotransferase family. MiaB subfamily. In terms of assembly, monomer. Requires [4Fe-4S] cluster as cofactor.

Its subcellular location is the cytoplasm. The catalysed reaction is N(6)-dimethylallyladenosine(37) in tRNA + (sulfur carrier)-SH + AH2 + 2 S-adenosyl-L-methionine = 2-methylsulfanyl-N(6)-dimethylallyladenosine(37) in tRNA + (sulfur carrier)-H + 5'-deoxyadenosine + L-methionine + A + S-adenosyl-L-homocysteine + 2 H(+). Catalyzes the methylthiolation of N6-(dimethylallyl)adenosine (i(6)A), leading to the formation of 2-methylthio-N6-(dimethylallyl)adenosine (ms(2)i(6)A) at position 37 in tRNAs that read codons beginning with uridine. This chain is tRNA-2-methylthio-N(6)-dimethylallyladenosine synthase, found in Chloroherpeton thalassium (strain ATCC 35110 / GB-78).